We begin with the raw amino-acid sequence, 121 residues long: Large ribosomal subunit protein bL12 (121 aa).

It belongs to the bacterial ribosomal protein bL12 family. As to quaternary structure, homodimer. Part of the ribosomal stalk of the 50S ribosomal subunit. Forms a multimeric L10(L12)X complex, where L10 forms an elongated spine to which 2 to 4 L12 dimers bind in a sequential fashion. Binds GTP-bound translation factors.

Its function is as follows. Forms part of the ribosomal stalk which helps the ribosome interact with GTP-bound translation factors. Is thus essential for accurate translation. The protein is Large ribosomal subunit protein bL12 of Macrococcus caseolyticus (strain JCSC5402) (Macrococcoides caseolyticum).